Here is a 127-residue protein sequence, read N- to C-terminus: Large ribosomal subunit protein uL22 (127 aa).

Belongs to the universal ribosomal protein uL22 family. Part of the 50S ribosomal subunit.

Functionally, this protein binds specifically to 23S rRNA; its binding is stimulated by other ribosomal proteins, e.g. L4, L17, and L20. It is important during the early stages of 50S assembly. It makes multiple contacts with different domains of the 23S rRNA in the assembled 50S subunit and ribosome. The globular domain of the protein is located near the polypeptide exit tunnel on the outside of the subunit, while an extended beta-hairpin is found that lines the wall of the exit tunnel in the center of the 70S ribosome. This chain is Large ribosomal subunit protein uL22, found in Brucella suis (strain ATCC 23445 / NCTC 10510).